We begin with the raw amino-acid sequence, 446 residues long: Tubulin beta chain (446 aa).

GTP contacts are provided by glutamine 11, glutamate 69, serine 138, glycine 142, threonine 143, glycine 144, asparagine 204, and asparagine 226. Glutamate 69 lines the Mg(2+) pocket. Residues 426–446 form a disordered region; that stretch reads QDATAEEEGEYVEDEDEMDGM. Positions 429 to 446 are enriched in acidic residues; that stretch reads TAEEEGEYVEDEDEMDGM.

It belongs to the tubulin family. In terms of assembly, dimer of alpha and beta chains. A typical microtubule is a hollow water-filled tube with an outer diameter of 25 nm and an inner diameter of 15 nM. Alpha-beta heterodimers associate head-to-tail to form protofilaments running lengthwise along the microtubule wall with the beta-tubulin subunit facing the microtubule plus end conferring a structural polarity. Microtubules usually have 13 protofilaments but different protofilament numbers can be found in some organisms and specialized cells. The cofactor is Mg(2+).

The protein resides in the cytoplasm. Its subcellular location is the cytoskeleton. Functionally, tubulin is the major constituent of microtubules, a cylinder consisting of laterally associated linear protofilaments composed of alpha- and beta-tubulin heterodimers. Microtubules grow by the addition of GTP-tubulin dimers to the microtubule end, where a stabilizing cap forms. Below the cap, tubulin dimers are in GDP-bound state, owing to GTPase activity of alpha-tubulin. The sequence is that of Tubulin beta chain from Euplotes crassus.